Reading from the N-terminus, the 338-residue chain is Aspartate carbamoyltransferase catalytic subunit (338 aa).

The carbamoyl phosphate site is built by Arg59 and Thr60. An L-aspartate-binding site is contributed by Lys87. Carbamoyl phosphate-binding residues include Arg109, His142, and Gln145. Arg182 and Arg253 together coordinate L-aspartate. 2 residues coordinate carbamoyl phosphate: Gly294 and Pro295.

Belongs to the aspartate/ornithine carbamoyltransferase superfamily. ATCase family. As to quaternary structure, heterododecamer (2C3:3R2) of six catalytic PyrB chains organized as two trimers (C3), and six regulatory PyrI chains organized as three dimers (R2).

It carries out the reaction carbamoyl phosphate + L-aspartate = N-carbamoyl-L-aspartate + phosphate + H(+). The protein operates within pyrimidine metabolism; UMP biosynthesis via de novo pathway; (S)-dihydroorotate from bicarbonate: step 2/3. Its function is as follows. Catalyzes the condensation of carbamoyl phosphate and aspartate to form carbamoyl aspartate and inorganic phosphate, the committed step in the de novo pyrimidine nucleotide biosynthesis pathway. The chain is Aspartate carbamoyltransferase catalytic subunit from Prochlorococcus marinus (strain MIT 9515).